The sequence spans 221 residues: Phosphoribosylformylglycinamidine synthase subunit PurQ (221 aa).

A Glutamine amidotransferase type-1 domain is found at 8-221 (NVGIIRFPGT…GLKFFKSFLD (214 aa)). Cys91 serves as the catalytic Nucleophile. Residues His198 and Glu200 contribute to the active site.

In terms of assembly, part of the FGAM synthase complex composed of 1 PurL, 1 PurQ and 2 PurS subunits.

The protein localises to the cytoplasm. It carries out the reaction N(2)-formyl-N(1)-(5-phospho-beta-D-ribosyl)glycinamide + L-glutamine + ATP + H2O = 2-formamido-N(1)-(5-O-phospho-beta-D-ribosyl)acetamidine + L-glutamate + ADP + phosphate + H(+). It catalyses the reaction L-glutamine + H2O = L-glutamate + NH4(+). The protein operates within purine metabolism; IMP biosynthesis via de novo pathway; 5-amino-1-(5-phospho-D-ribosyl)imidazole from N(2)-formyl-N(1)-(5-phospho-D-ribosyl)glycinamide: step 1/2. Its function is as follows. Part of the phosphoribosylformylglycinamidine synthase complex involved in the purines biosynthetic pathway. Catalyzes the ATP-dependent conversion of formylglycinamide ribonucleotide (FGAR) and glutamine to yield formylglycinamidine ribonucleotide (FGAM) and glutamate. The FGAM synthase complex is composed of three subunits. PurQ produces an ammonia molecule by converting glutamine to glutamate. PurL transfers the ammonia molecule to FGAR to form FGAM in an ATP-dependent manner. PurS interacts with PurQ and PurL and is thought to assist in the transfer of the ammonia molecule from PurQ to PurL. This Methanosphaera stadtmanae (strain ATCC 43021 / DSM 3091 / JCM 11832 / MCB-3) protein is Phosphoribosylformylglycinamidine synthase subunit PurQ.